A 76-amino-acid chain; its full sequence is Alpha/kappa-conotoxin pl14a (76 aa).

The signal sequence occupies residues 1 to 24 (MPSVRSVTCCCLLWMMFSVQLVTP). A propeptide spanning residues 25–39 (GSPGTAQLSGHRTAR) is cleaved from the precursor. Disulfide bonds link cysteine 46–cysteine 61 and cysteine 50–cysteine 63. Arginine 64 is modified (arginine amide). Residues 65 to 76 (GKRDAVSSSMAV) constitute a propeptide that is removed on maturation.

Belongs to the conotoxin J superfamily. As to expression, expressed by the venom duct.

The protein localises to the secreted. Highly inhibits both nicotinic acetylcholine receptors (neuronal (IC(50)=8.7 uM for alpha-3/beta-4) and muscular (IC(50)=0.54 uM for alpha-1-beta-1-epsilon-delta (CHRNA1-CHRNB1-CHRND-CHRNE)) subtypes) and the voltage-gated potassium channel Kv1.6/KCNA6 subtype (IC(50)=1.59 uM). This chain is Alpha/kappa-conotoxin pl14a, found in Conus planorbis (Planorbis cone).